The primary structure comprises 389 residues: Meiosis-specific protein MEI4 (389 aa).

The interval 1-127 (MDIQPWYLKT…LSQHFVESTD (127 aa)) is interaction with REC114.

It belongs to the MEI4L family. Part of the MCD recombinosome complex, at least composed of IHO1, REC114 and MEI4. Forms a complex with REC114; the interaction is required for MEI4 stability. Interacts (via N-terminal domain) with REC114 (via C-terminal domain). Interacts with IHO1. As to expression, expressed in adult testis and brain and in embryonic ovary.

The protein localises to the chromosome. Functionally, required for DNA double-strand breaks (DSBs) formation in unsynapsed regions during meiotic recombination. Probably acts by forming a complex with IHO1 and REC114, which activates DSBs formation in unsynapsed regions, an essential step to ensure completion of synapsis. The polypeptide is Meiosis-specific protein MEI4 (Mus musculus (Mouse)).